Here is a 354-residue protein sequence, read N- to C-terminus: MAQLKYNKDIDELERNAAKWWPDFLAKKESSTSIIPKLVESQDAFISLLNLSKNNPFDIFQLIDASKFPPNLFLKHLVVLTDFGGEPLNRLNQNFDSLFPMIPYGIHYITKVLGKFEFFWNEKKYEYVFQELPVTSLTNSKLKIDGASISKTVPLSDLYKDVIVLLMFGANAVNSEVSEVLMKCEVGNLIGKTDELKKFIKERYIFVSRITGGAEANTLGQVAQTHVIDFLRTRFGSKGHDIKSNGHIEGVTHNDGQTLTTFDVVIKKGSKSVAIEISFQVTTNSTIERKAGQAKARYDMVSDTGNYIAYIIDGAGNFQRKNAITTICNNSHCTVAYTEEELNVLLKFILEKLE.

Homodimer.

The enzyme catalyses Endonucleolytic cleavage of DNA to give specific double-stranded fragments with terminal 5'-phosphates.. Functionally, a P subtype restriction enzyme that recognizes the double-stranded sequence 5'-GGYRCC-3' and cleaves after G-1. The chain is Type II restriction enzyme BanI (banIR) from Aneurinibacillus aneurinilyticus (Bacillus aneurinolyticus).